Reading from the N-terminus, the 439-residue chain is Xaa-Pro dipeptidase (439 aa).

Mn(2+) is bound by residues aspartate 244, aspartate 255, histidine 335, glutamate 380, and glutamate 418.

This sequence belongs to the peptidase M24B family. Bacterial-type prolidase subfamily. It depends on Mn(2+) as a cofactor.

It carries out the reaction Xaa-L-Pro dipeptide + H2O = an L-alpha-amino acid + L-proline. In terms of biological role, splits dipeptides with a prolyl residue in the C-terminal position. The polypeptide is Xaa-Pro dipeptidase (Shewanella frigidimarina (strain NCIMB 400)).